The sequence spans 152 residues: UPF0225 protein YchJ (152 aa).

Belongs to the UPF0225 family.

The polypeptide is UPF0225 protein YchJ (Shigella dysenteriae serotype 1 (strain Sd197)).